The chain runs to 29 residues: GLPTCGETCTLGKCNTPKCTCNWPICYKN.

Residues 1 to 29 constitute a cross-link (cyclopeptide (Gly-Asn)); the sequence is GLPTCGETCTLGKCNTPKCTCNWPICYKN. Intrachain disulfides connect Cys5–Cys19, Cys9–Cys21, and Cys14–Cys26.

This is a cyclic peptide. Post-translationally, contains 3 disulfide bonds.

In terms of biological role, probably participates in a plant defense mechanism (Potential). Binds to and induces leakage in phospholipd membranes, particularly ones containing 1-palmitoyl-2-oleophosphatidylethanolamine (POPE). In vitro, displays cytotoxicity against cultured cells but no hemolytic activity towards fresh erythrocytes. The protein is Cyclotide mech-3 of Melicytus chathamicus (Chatham Island mahoe).